The following is a 478-amino-acid chain: Sorting nexin-4 (478 aa).

Residues 1 to 10 (MAVIDQHQDD) show a composition bias toward basic and acidic residues. The disordered stretch occupies residues 1–56 (MAVIDQHQDDFSNVSWNTDEHTAAESSSSVTATEFDDTERNGHNAYESDAPGSDGQ). Over residues 24 to 33 (AESSSSVTAT) the composition is skewed to low complexity. The 123-residue stretch at 58 to 180 (VLDCVVSEPL…IFLESPDWNA (123 aa)) folds into the PX domain. 4 residues coordinate a 1,2-diacyl-sn-glycero-3-phospho-(1D-myo-inositol-3-phosphate): R101, T103, K127, and R146. A disordered region spans residues 459–478 (EGVSGTRSTGVEPPGRRLAD).

This sequence belongs to the sorting nexin family. In terms of assembly, interacts with the mitochondrial prohibitin complex subunits PHB1 and PHB2; the interaction is direct and plays a role in mitophagy.

The protein resides in the cytoplasm. It localises to the cytosol. It is found in the preautophagosomal structure membrane. Its subcellular location is the endosome membrane. The protein localises to the mitochondrion membrane. The protein resides in the lipid droplet. Functionally, sorting nexin, involved in the separation or division of vacuoles throughout the entire life cycle of the cells. Involved in retrieval of late-Golgi SNAREs from post-Golgi endosomes to the trans-Golgi network, for cytoplasm to vacuole transport (Cvt), and autophagy of large cargos including mitophagy, pexophagy and glycophagy. Required for the switch to necrotrophic growth. This is Sorting nexin-4 from Colletotrichum higginsianum (strain IMI 349063) (Crucifer anthracnose fungus).